A 574-amino-acid chain; its full sequence is Probable cytochrome c oxidase subunit 1 (574 aa).

Residues 40–60 (IGIMYCVACFIFFFVGGLLAL) traverse the membrane as a helical segment. His-86 contacts Fe(II)-heme a. A run of 6 helical transmembrane segments spans residues 89 to 109 (IMLL…VLPL), 121 to 141 (LNAF…AGFI), 170 to 190 (LWIM…VNMI), 213 to 233 (ILVT…ALFG), 258 to 278 (LFWF…FGIV), and 290 to 310 (IFGY…SVAV). 2 residues coordinate Cu cation: His-264 and Tyr-268. Residues 264-268 (HPEVY) constitute a cross-link (1'-histidyl-3'-tyrosine (His-Tyr)). Positions 313 and 314 each coordinate Cu cation. A run of 2 helical transmembrane segments spans residues 315 to 335 (MFAT…LIAV) and 359 to 379 (MLFS…GVLL). A heme a3-binding site is contributed by His-397. 3 consecutive transmembrane segments (helical) span residues 398–418 (FHYV…YFWF), 433–453 (LHFW…HWLG), and 476–496 (VSTI…WNVF). A Fe(II)-heme a-binding site is contributed by His-399.

It belongs to the heme-copper respiratory oxidase family. As to quaternary structure, associates with subunits II, III and IV to form cytochrome c oxidase. It depends on Cu(2+) as a cofactor. Heme serves as cofactor.

Its subcellular location is the cell membrane. It catalyses the reaction 4 Fe(II)-[cytochrome c] + O2 + 8 H(+)(in) = 4 Fe(III)-[cytochrome c] + 2 H2O + 4 H(+)(out). It functions in the pathway energy metabolism; oxidative phosphorylation. Functionally, cytochrome c oxidase is the component of the respiratory chain that catalyzes the reduction of oxygen to water. Subunits 1-3 form the functional core of the enzyme complex. CO I is the catalytic subunit of the enzyme. Electrons originating in cytochrome c are transferred via the copper A center of subunit 2 and heme A of subunit 1 to the bimetallic center formed by heme A3 and copper B. This is Probable cytochrome c oxidase subunit 1 (ctaD) from Mycobacterium leprae (strain TN).